The sequence spans 513 residues: uncharacterized protein (513 aa).

The 209-residue stretch at 11–219 folds into the CYTH domain; that stretch reads HLEVERKFDV…SKLARVLGAT (209 aa). Residues 228–506 form the CHAD domain; sequence PQPPADPVHR…LEAALRKLDK (279 aa).

This is an uncharacterized protein from Mycobacterium tuberculosis (strain CDC 1551 / Oshkosh).